The following is a 143-amino-acid chain: MKEETIFFFKEDTQYQLRQRAEIRTWLNTIAKKEKYSILELNYIFCSDEYLLQMNRDFLDHDYYTDIITFDNSEVKGKIEGDIFISIDRVKDNAQLQHSTVKDELHRVLAHGLLHLTGYKDKTTKEKEMMRAKEDASLSLRKF.

Histidine 111, histidine 115, and aspartate 121 together coordinate Zn(2+).

Belongs to the endoribonuclease YbeY family. Requires Zn(2+) as cofactor.

The protein resides in the cytoplasm. Functionally, single strand-specific metallo-endoribonuclease involved in late-stage 70S ribosome quality control and in maturation of the 3' terminus of the 16S rRNA. This chain is Endoribonuclease YbeY, found in Cytophaga hutchinsonii (strain ATCC 33406 / DSM 1761 / CIP 103989 / NBRC 15051 / NCIMB 9469 / D465).